Reading from the N-terminus, the 64-residue chain is Beta-insect depressant toxin BmKIT4 (64 aa).

In terms of domain architecture, LCN-type CS-alpha/beta spans 1-61; sequence DGYIRGSNGC…TWKSESNTCG (61 aa). Disulfide bonds link cysteine 10-cysteine 60, cysteine 14-cysteine 35, cysteine 21-cysteine 42, and cysteine 25-cysteine 44. Cysteine 60 is subject to Cysteine amide.

It belongs to the long (4 C-C) scorpion toxin superfamily. Sodium channel inhibitor family. Beta subfamily. As to expression, expressed by the venom gland.

The protein localises to the secreted. Its function is as follows. Depressant insect beta-toxins cause a transient contraction paralysis followed by a slow flaccid paralysis. They bind voltage-independently at site-4 of sodium channels (Nav) and shift the voltage of activation toward more negative potentials thereby affecting sodium channel activation and promoting spontaneous and repetitive firing. This toxin is active only on insects. The sequence is that of Beta-insect depressant toxin BmKIT4 from Olivierus martensii (Manchurian scorpion).